We begin with the raw amino-acid sequence, 1028 residues long: Collagen alpha-1(VI) chain (1028 aa).

Residues 1-19 (MRAARALLPLLLQACWTAA) form the signal peptide. Residues 20–256 (QDEPETPRAV…CCSFECQPAR (237 aa)) form an N-terminal globular domain region. Residues 37-235 (DLFFVLDTSE…EAISQTIDTI (199 aa)) enclose the VWFA 1 domain. A glycan (N-linked (GlcNAc...) asparagine) is linked at asparagine 212. The segment at 254-590 (PARGPPGLRG…GPPGHQGPPG (337 aa)) is disordered. A triple-helical region region spans residues 257–592 (GPPGLRGDPG…PGHQGPPGPD (336 aa)). The short motif at 262–264 (RGD) is the Cell attachment site element. Basic and acidic residues-rich tracts occupy residues 268–285 (EGER…EAGD) and 301–334 (KGEK…DGVK). Low complexity predominate over residues 384-394 (RPGSSGPSGDE). The Cell attachment site signature appears at 442-444 (RGD). Over residues 457-471 (EGPVGVPGDPGEAGP) the composition is skewed to low complexity. The Cell attachment site signature appears at 478-480 (RGD). A compositionally biased stretch (low complexity) spans 483–493 (PPGSEGARGAP). Residues asparagine 516 and asparagine 537 are each glycosylated (N-linked (GlcNAc...) asparagine). Positions 550 to 560 (GEAGDPGDDNN) are enriched in acidic residues. The span at 579 to 590 (PQGPPGHQGPPG) shows a compositional bias: pro residues. Positions 593–1028 (ECEILDIIMK…QTVSRKVALG (436 aa)) are C-terminal globular domain. VWFA domains follow at residues 615 to 805 (DLLF…LKNV) and 829 to 1021 (DITI…HQTV). N-linked (GlcNAc...) asparagine glycosylation is found at asparagine 804 and asparagine 896.

Belongs to the type VI collagen family. Trimers composed of three different chains: alpha-1(VI), alpha-2(VI), and alpha-3(VI) or alpha-5(VI) or alpha-6(VI). Post-translationally, prolines at the third position of the tripeptide repeating unit (G-X-Y) are hydroxylated in some or all of the chains.

It localises to the secreted. The protein resides in the extracellular space. It is found in the extracellular matrix. Collagen VI acts as a cell-binding protein. The sequence is that of Collagen alpha-1(VI) chain (COL6A1) from Homo sapiens (Human).